Here is a 155-residue protein sequence, read N- to C-terminus: Ribonuclease H (155 aa).

The RNase H type-1 domain maps to 5 to 146 (LAEVVEIFTD…ADMLANRGVQ (142 aa)). The Mg(2+) site is built by D14, E52, D74, and D138.

This sequence belongs to the RNase H family. Monomer. It depends on Mg(2+) as a cofactor.

It is found in the cytoplasm. It carries out the reaction Endonucleolytic cleavage to 5'-phosphomonoester.. Functionally, endonuclease that specifically degrades the RNA of RNA-DNA hybrids. This chain is Ribonuclease H, found in Nitrosospira multiformis (strain ATCC 25196 / NCIMB 11849 / C 71).